Reading from the N-terminus, the 568-residue chain is Acetate--CoA ligase CCL3 (568 aa).

ATP-binding positions include 204–212 (TSGTTASPK), 340–345 (HTYGLS), Asp437, 449–452 (IKDR), and Lys547. The tract at residues 272 to 340 (TAKGVYSAIA…MSEKGFKVAH (69 aa)) is SBD1. Residues 341 to 417 (TYGLSETYGP…MRGNAVMKGY (77 aa)) are SBD2.

The protein belongs to the ATP-dependent AMP-binding enzyme family. In terms of tissue distribution, mostly expressed in glandular trichomes (lupulin glands) after flowering and in old leaves, and, to a lower extent, in stems, young leaves, cones and flowers.

The protein localises to the cytoplasm. The protein resides in the cytosol. It catalyses the reaction acetate + ATP + CoA = acetyl-CoA + AMP + diphosphate. It carries out the reaction propanoate + ATP + CoA = propanoyl-CoA + AMP + diphosphate. The enzyme catalyses butanoate + ATP + CoA = butanoyl-CoA + AMP + diphosphate. The catalysed reaction is 3-methylbutanoate + ATP + CoA = 3-methylbutanoyl-CoA + AMP + diphosphate. It catalyses the reaction pentanoate + ATP + CoA = pentanoyl-CoA + AMP + diphosphate. It carries out the reaction hexanoate + ATP + CoA = hexanoyl-CoA + AMP + diphosphate. The enzyme catalyses 2-methylpropanoate + ATP + CoA = 2-methylpropanoyl-CoA + AMP + diphosphate. The catalysed reaction is 2-methylbutanoate + ATP + CoA = 2-methylbutanoyl-CoA + AMP + diphosphate. It catalyses the reaction 2-methylpentanoate + ATP + CoA = 2-methylpentanoyl-CoA + AMP + diphosphate. It carries out the reaction 3-methylpentanoate + ATP + CoA = 3-methylpentanoyl-CoA + AMP + diphosphate. The enzyme catalyses 4-methylpentanoate + ATP + CoA = 4-methylpentanoyl-CoA + AMP + diphosphate. It functions in the pathway secondary metabolite biosynthesis. Functionally, involved in the biosynthesis of prenylated phenolics natural products which contribute to the bitter taste of beer and display broad biological activities. Catalyzes the ligation of CoA on propanoate to produce propanoyl-CoA. Can also use 2-methylpropanoate (isobutyric acid), acetate, butanoate, isovalerate, pentanoate, hexanoate, 2-methylbutanoate, 2-methylpentanoate, 3-methylpentanoate and 4-methylpentanoate as substrates with a lower efficiency. Triggers the formation of very short chain acyl-CoAs from the corresponding fatty acids, including acetic acid, propanoic acid, butyric acid and its isomer. In Humulus lupulus (European hop), this protein is Acetate--CoA ligase CCL3.